The sequence spans 198 residues: Na(+)-translocating NADH-quinone reductase subunit E (198 aa).

A run of 6 helical transmembrane segments spans residues 11 to 31 (SIFI…FLAV), 39 to 59 (MGLG…NNLI), 77 to 97 (FLSF…LEMA), 110 to 130 (GIFL…SFMV), 140 to 160 (VVYG…MAGI), and 176 to 196 (LGIT…FSGI).

The protein belongs to the NqrDE/RnfAE family. As to quaternary structure, composed of six subunits; NqrA, NqrB, NqrC, NqrD, NqrE and NqrF.

It localises to the cell inner membrane. The enzyme catalyses a ubiquinone + n Na(+)(in) + NADH + H(+) = a ubiquinol + n Na(+)(out) + NAD(+). In terms of biological role, NQR complex catalyzes the reduction of ubiquinone-1 to ubiquinol by two successive reactions, coupled with the transport of Na(+) ions from the cytoplasm to the periplasm. NqrA to NqrE are probably involved in the second step, the conversion of ubisemiquinone to ubiquinol. The sequence is that of Na(+)-translocating NADH-quinone reductase subunit E from Aeromonas hydrophila subsp. hydrophila (strain ATCC 7966 / DSM 30187 / BCRC 13018 / CCUG 14551 / JCM 1027 / KCTC 2358 / NCIMB 9240 / NCTC 8049).